Here is a 129-residue protein sequence, read N- to C-terminus: UPF0212 protein Mbar_A2902 (129 aa).

It belongs to the UPF0212 family.

The sequence is that of UPF0212 protein Mbar_A2902 from Methanosarcina barkeri (strain Fusaro / DSM 804).